Consider the following 1905-residue polypeptide: Tudor domain-containing 6-like (1905 aa).

Tudor domains are found at residues 1–30 (MVEV…LREM), 215–279 (YERG…LFDL), and 435–491 (SVTP…AYEL). Residues 564 to 795 (SRAEGSFGNS…SKLTPPLSKL (232 aa)) form a disordered region. The segment covering 573-591 (SEKRNQLNDLDRGGRKETT) has biased composition (basic and acidic residues). The span at 592–602 (SKFQPYSQGSK) shows a compositional bias: polar residues. Basic and acidic residues predominate over residues 622 to 631 (FQTKEREQFE). Polar residues-rich tracts occupy residues 651–660 (VQKNMSQSGF) and 687–704 (LYSQ…SSYS). Residues 715–726 (RSKERQVSEHKQ) show a composition bias toward basic and acidic residues. Composition is skewed to polar residues over residues 746–766 (KASQ…GSDQ) and 774–787 (NASQ…QESK). 2 consecutive Tudor domains span residues 853–910 (YVNL…LLSI) and 1060–1118 (EIEV…IAAI). Disordered regions lie at residues 1213 to 1245 (IEDN…TPAV), 1449 to 1599 (EDFE…TETE), 1655 to 1682 (VEDL…SGPV), and 1827 to 1905 (ESPA…APSV). Acidic residues-rich tracts occupy residues 1491-1500 (EAEGLEDQDQ) and 1522-1535 (EQAE…DPGT). Residues 1553-1588 (SQEHKDFPEQEEDRVAEHKNDISEPDLQSKEQKEDL) are compositionally biased toward basic and acidic residues. A compositionally biased stretch (polar residues) spans 1663–1673 (QESQICISGSD). The span at 1876 to 1887 (FEPETDDMEQME) shows a compositional bias: acidic residues.

In terms of assembly, interacts with FRGY2 (a component of messenger ribonucleoprotein (mRNP) particle) during germ cell development. Expressed in testis.

The protein localises to the cytoplasm. In terms of biological role, tudor domain-containing protein involved in germ cell development, more specifically the formation of chromatoid body (during spermiogenesis), Balbiani body (during oogenesis), germ plasm (upon fertilization), and for proper miRNA expression and spliceosome maturation. Component of cytoplasmic mRNP particle through interaction with FRGY2, and binds to maternal mRNA related to cell cycle (RCC1, RHAMM, INCENP-A, MAD2L1, HELLS) and a germ plasm specific mRNA (Dead end/Dnd1), it is proposed a role in translational activation of the maternal mRNAs repressed in mRNP particle. This Xenopus laevis (African clawed frog) protein is Tudor domain-containing 6-like.